A 521-amino-acid polypeptide reads, in one-letter code: Cysteine protease atg-4.2 (521 aa).

Low complexity predominate over residues 90-100; the sequence is MMGSIRPSSSS. Residues 90–109 form a disordered region; sequence MMGSIRPSSSSQDVHSTGEI. Cysteine 203 functions as the Nucleophile in the catalytic mechanism. Catalysis depends on residues aspartate 394 and histidine 396. Positions 499–521 are disordered; it reads PSYEREVSETEQAQADKHGFEML.

The protein belongs to the peptidase C54 family.

The protein localises to the cytoplasm. It carries out the reaction [protein]-C-terminal L-amino acid-glycyl-phosphatidylethanolamide + H2O = [protein]-C-terminal L-amino acid-glycine + a 1,2-diacyl-sn-glycero-3-phosphoethanolamine. In terms of biological role, cysteine protease required for autophagy. Cleaves the C-terminal amino acid of ATG8 family proteins lgg-1, to reveal a C-terminal glycine. Exposure of the glycine at the C-terminus is essential for ATG8 proteins conjugation to phosphatidylethanolamine (PE) and insertion to membranes, which is necessary for autophagy. Its cleavage activity is functionally redundant to atg-4.1, but it cleaves lgg-1 precursors less efficiently than atg-4.1. In contrast to atg-4.1, plays a more significant role in the later phases of autophagy and in addition has a role in autophagosome maturation. Acts redundantly with atg-4.1 to promote the lgg-1 delipidation to release the protein from membranes, which facilitates multiple events during macroautophagy. Regulates the accumulation of autophagic structures in neurons and is specifically, required for the maturation and elimination of autophagosomes from the synaptic region of AIY interneurons. The protein is Cysteine protease atg-4.2 of Caenorhabditis elegans.